We begin with the raw amino-acid sequence, 619 residues long: Probable galacturonosyltransferase 7 (619 aa).

At 1-19 (MKGGGGGGGGGGGGKRRWK) the chain is on the cytoplasmic side. A helical; Signal-anchor for type II membrane protein transmembrane segment spans residues 20–40 (VLVIGVLVLVILSMLVPLAFL). Over 41 to 619 (LGLHNGFHSP…RFLSDCNVNP (579 aa)) the chain is Lumenal. N-linked (GlcNAc...) asparagine glycosylation is found at Asn68, Asn106, Asn132, Asn343, and Asn421. Residues 95–139 (KSDINVGSRDVNATSGTDSKKRGLPVSPTVVANPSPANKTKSEAS) form a disordered region. The span at 124–139 (VVANPSPANKTKSEAS) shows a compositional bias: polar residues.

The protein belongs to the glycosyltransferase 8 family. Expressed in roots, inflorescences, flowers, siliques, leaves and stems.

The protein localises to the golgi apparatus membrane. It participates in glycan metabolism; pectin biosynthesis. In terms of biological role, may be involved in pectin biosynthesis. The sequence is that of Probable galacturonosyltransferase 7 (GAUT7) from Arabidopsis thaliana (Mouse-ear cress).